An 89-amino-acid chain; its full sequence is MKFLEKGVYKIFGAVILVSMIGALVAEPIALGDAGLYYQYYVGDIDTAQQCYLVAADSAITGAAISAALGPAGLASGVFTVVFSTTVLA.

2 consecutive transmembrane segments (helical) span residues 11-31 and 63-83; these read IFGAVILVSMIGALVAEPIAL and AAISAALGPAGLASGVFTVVF.

The protein resides in the cell membrane. This is an uncharacterized protein from Methanocaldococcus jannaschii (strain ATCC 43067 / DSM 2661 / JAL-1 / JCM 10045 / NBRC 100440) (Methanococcus jannaschii).